The following is a 139-amino-acid chain: Membrane protein YqfB (139 aa).

Residues 3–23 (DLLTNPLIIAAIIGIISAIFG) traverse the membrane as a helical segment. Positions 25-87 (KSKEEKQNSQ…TARNLKGLER (63 aa)) are disordered. A coiled-coil region spans residues 62-97 (NRMEQARREAEERRRETARNLKGLERDLAAAKQKTV). Residues 65–87 (EQARREAEERRRETARNLKGLER) are compositionally biased toward basic and acidic residues.

It is found in the cell membrane. The sequence is that of Membrane protein YqfB (yqfB) from Bacillus subtilis (strain 168).